The sequence spans 684 residues: Kinesin-like protein KIN-13B (684 aa).

2 disordered regions span residues 1 to 31 (MSGR…SNGR) and 71 to 103 (GNEF…SPGL). Composition is skewed to polar residues over residues 18–31 (LSDN…SNGR) and 79–91 (TTPQ…TNQR). The region spanning 169 to 492 (KIKVVVRKRP…LRYADRVKSL (324 aa)) is the Kinesin motor domain. 258–265 (GQTGSGKT) contacts ATP. Residues 574–594 (KPTIQMKSRDMPRPDMKKSNS) form a disordered region. The segment covering 580-594 (KSRDMPRPDMKKSNS) has biased composition (basic and acidic residues). Positions 596–626 (DNLNALLQEEEDLVNAHRKQVEDTMNIVKEE) form a coiled coil.

The protein belongs to the TRAFAC class myosin-kinesin ATPase superfamily. Kinesin family. KIN-13 subfamily.

In terms of biological role, acts redundantly with KIN13A to modulate cell wall synthesis and cell expansion via the THE1 pathway. This is Kinesin-like protein KIN-13B from Arabidopsis thaliana (Mouse-ear cress).